The chain runs to 186 residues: ATP synthase subunit b (186 aa).

The chain crosses the membrane as a helical span at residues 28–48 (IVWSIIPFAVILFVFAKVVLP).

This sequence belongs to the ATPase B chain family. As to quaternary structure, F-type ATPases have 2 components, F(1) - the catalytic core - and F(0) - the membrane proton channel. F(1) has five subunits: alpha(3), beta(3), gamma(1), delta(1), epsilon(1). F(0) has three main subunits: a(1), b(2) and c(10-14). The alpha and beta chains form an alternating ring which encloses part of the gamma chain. F(1) is attached to F(0) by a central stalk formed by the gamma and epsilon chains, while a peripheral stalk is formed by the delta and b chains.

Its subcellular location is the cell membrane. Functionally, f(1)F(0) ATP synthase produces ATP from ADP in the presence of a proton or sodium gradient. F-type ATPases consist of two structural domains, F(1) containing the extramembraneous catalytic core and F(0) containing the membrane proton channel, linked together by a central stalk and a peripheral stalk. During catalysis, ATP synthesis in the catalytic domain of F(1) is coupled via a rotary mechanism of the central stalk subunits to proton translocation. Its function is as follows. Component of the F(0) channel, it forms part of the peripheral stalk, linking F(1) to F(0). In Corynebacterium urealyticum (strain ATCC 43042 / DSM 7109), this protein is ATP synthase subunit b.